The following is a 259-amino-acid chain: Ferritin-2, chloroplastic (259 aa).

A chloroplast-targeting transit peptide spans 1–52; that stretch reads MLLKLAPAFTLLNSHGENLSPMLSTSSQGFVLKNFSTKSRNGLLVVCASKGS. Positions 53-85 are extension peptide (EP); it reads NTKPLTGVVFEPFEEVKKELMLVPTVPQVSLAR. The region spanning 86–239 is the Ferritin-like diiron domain; that stretch reads HKYSDQCEAA…EYVAQLRRVG (154 aa). Fe cation-binding residues include glutamate 103, glutamate 138, histidine 141, and glutamine 221.

Belongs to the ferritin family. In terms of assembly, oligomer of 24 subunits. There are two types of subunits: L (light) chain and H (heavy) chain. The major chain can be light or heavy, depending on the species and tissue type. The functional molecule forms a roughly spherical shell with a diameter of 12 nm and contains a central cavity into which the insoluble mineral iron core is deposited.

It is found in the plastid. The protein resides in the chloroplast. The catalysed reaction is 4 Fe(2+) + O2 + 4 H(+) = 4 Fe(3+) + 2 H2O. In terms of biological role, stores iron in a soluble, non-toxic, readily available form. Important for iron homeostasis. Has ferroxidase activity. Iron is taken up in the ferrous form and deposited as ferric hydroxides after oxidation. This Nicotiana tabacum (Common tobacco) protein is Ferritin-2, chloroplastic (FER2).